A 266-amino-acid chain; its full sequence is 2-Cys peroxiredoxin BAS1, chloroplastic (266 aa).

The segment covering 1–16 (MASVASSTTLISSPSS) has biased composition (low complexity). The tract at residues 1 to 25 (MASVASSTTLISSPSSRVFPAKSSL) is disordered. A chloroplast-targeting transit peptide spans 1–65 (MASVASSTTL…SSTSRRSFAV (65 aa)). Residues 73–232 (PLVGNKAPDF…TMRTLQALQY (160 aa)) form the Thioredoxin domain. Residue cysteine 119 is the Cysteine sulfenic acid (-SOH) intermediate of the active site.

Belongs to the peroxiredoxin family. AhpC/Prx1 subfamily. As to quaternary structure, homodimer; disulfide-linked, upon oxidation. Interacts with the plastidial thioredoxin CDSP32. Interacts with the plastidial NADPH-dependent thioredoxin reductase ANTR-C.

Its subcellular location is the plastid. It localises to the chloroplast. The enzyme catalyses a hydroperoxide + [thioredoxin]-dithiol = an alcohol + [thioredoxin]-disulfide + H2O. Functionally, thiol-specific peroxidase that catalyzes the reduction of hydrogen peroxide and organic hydroperoxides to water and alcohols, respectively. Plays a role in cell protection against oxidative stress by detoxifying peroxides. May be an antioxidant enzyme particularly in the developing shoot and photosynthesizing leaf. This is 2-Cys peroxiredoxin BAS1, chloroplastic (BAS1) from Arabidopsis thaliana (Mouse-ear cress).